The chain runs to 435 residues: Amino acid transporter AVT6C (435 aa).

The interval 1–24 is disordered; sequence MTPQIKTHLLPKQEPSSSENHGSS. The next 11 membrane-spanning stretches (helical) occupy residues 28–48, 53–73, 100–120, 148–168, 181–201, 219–239, 260–280, 307–327, 354–374, 375–395, and 408–428; these read IVFN…PAAF, IVPA…SVGF, IAVQ…FSII, WNTR…PLVL, VSFL…ISAL, GSFW…TFHF, ISVI…YLLF, IVRL…NFSL, LALL…WYFF, QFMG…AIVL, and IVAA…ISTN.

Belongs to the amino acid/polyamine transporter 2 family. Amino acid/auxin permease (AAAP) (TC 2.A.18.6) subfamily.

It localises to the membrane. The chain is Amino acid transporter AVT6C from Arabidopsis thaliana (Mouse-ear cress).